Reading from the N-terminus, the 336-residue chain is DNA-directed RNA polymerase subunit alpha (336 aa).

Positions 1 to 232 (MIQKNWQELI…DQLGVFVNFD (232 aa)) are alpha N-terminal domain (alpha-NTD). Positions 248–336 (FNPALLKKVD…DLAKRYEDQY (89 aa)) are alpha C-terminal domain (alpha-CTD).

This sequence belongs to the RNA polymerase alpha chain family. Homodimer. The RNAP catalytic core consists of 2 alpha, 1 beta, 1 beta' and 1 omega subunit. When a sigma factor is associated with the core the holoenzyme is formed, which can initiate transcription.

It carries out the reaction RNA(n) + a ribonucleoside 5'-triphosphate = RNA(n+1) + diphosphate. In terms of biological role, DNA-dependent RNA polymerase catalyzes the transcription of DNA into RNA using the four ribonucleoside triphosphates as substrates. This Rhizobium radiobacter (Agrobacterium tumefaciens) protein is DNA-directed RNA polymerase subunit alpha.